Consider the following 299-residue polypeptide: J domain-containing protein CG6693 (299 aa).

Residues 15-82 (DVYKLMELAR…QKRALYDEQG (68 aa)) form the J domain. Phosphoserine is present on S239. The disordered stretch occupies residues 266 to 299 (FEKKKKKSKKPAAKQETKPKLNGVKAGRVEKGKN). The span at 268–277 (KKKKKSKKPA) shows a compositional bias: basic residues.

The protein is J domain-containing protein CG6693 of Drosophila melanogaster (Fruit fly).